The sequence spans 1162 residues: Reticulon-4 (1162 aa).

Position 1 is an N-acetylmethionine (M1). Residues 1-183 (MEDIDQSSLV…ALPAASEPVI (183 aa)) are disordered. The Cytoplasmic segment spans residues 1–988 (MEDIDQSSLV…LYWRDIKKTG (988 aa)). Phosphoserine occurs at positions 7 and 16. Residues 7 to 16 (SSLVSSSADS) show a composition bias toward low complexity. The segment covering 31–54 (EPEDEEDEEDEEEEEDDEDLEELE) has biased composition (acidic residues). Pro residues predominate over residues 85-99 (PPAPRGPLPAAPPTA). S105 carries the phosphoserine modification. Residues 109 to 127 (SPAASAPSLPPAAAVLPSK) are compositionally biased toward low complexity. Phosphoserine occurs at positions 145, 165, 167, 329, and 344. T348 carries the post-translational modification Phosphothreonine. Over residues 408–422 (SLEQKGHGKDSESRN) the composition is skewed to basic and acidic residues. A disordered region spans residues 408–432 (SLEQKGHGKDSESRNENASFPRTPE). A Phosphoserine modification is found at S426. The residue at position 430 (T430) is a Phosphothreonine. 5 positions are modified to phosphoserine: S489, S690, S727, S768, and S832. A disordered region spans residues 711–730 (ELVDDSSPESEPVDLFSDDS). Positions 713–730 (VDDSSPESEPVDLFSDDS) are enriched in acidic residues. The residue at position 834 (T834) is a Phosphothreonine. S857 and S961 each carry phosphoserine. In terms of domain architecture, Reticulon spans 975 to 1162 (VVDLLYWRDI…KIPGLKRKAE (188 aa)). Residues 989–1009 (VVFGASLFLLLSLTVFSIVSV) traverse the membrane as a helical segment. At 1010–1078 (TAYIALALLS…VNSTIKELRR (69 aa)) the chain is on the lumenal side. N6-acetyllysine is present on K1074. The chain crosses the membrane as a helical span at residues 1079-1099 (LFLVDDLVDSLKFAVLMWVFT). Over 1100-1162 (YVGALFNGLT…KIPGLKRKAE (63 aa)) the chain is Cytoplasmic.

In terms of assembly, binds to RTN4R. Interacts with ATL1. Interacts with TMEM170A. Interacts with RTN4IP1. Interacts in trans with CNTNAP1. Interacts with REEP5. Interacts with GPR50. Interacts with synaptic plasticity regulator PANTS; the interaction results in enhanced RTN4-mediated inhibition of AMPA receptor clustering. As to quaternary structure, homodimer. Interacts with BAD/Bcl-xl and BCL2. Interact with RTN3. Interacts with NGBR. Interacts with SPTLC1. Interacts with GRAMD4. Interacts with CDH5. Interacts with BACE1 and BACE2. Interacts with REEP5. Interacts with RETREG3. In terms of assembly, interacts with BACE1 and BACE2. Interacts with TMEM33. In terms of tissue distribution, expressed in cardiomyocytes (at protein level). Highly expressed in brain but not deteceted in aorta, femoral and carotid arteries. Main isoform expressed in neurons. As to expression, expressed in cardiomyocytes (at protein level). Expressed in splenocytes, T-cells, B-cells, bone marrow derived dendritic cells and macrophages (at protein level). Expressed in neurons. Highly expressed in endothelial cells and vascular smooth muscle cells, including blood vessels and mesenteric arteries. Expressed in bronchial and alveolar epithelial cells as well as vascular endothelial cells of lungs. Expressed in B-cells, bone marrow dendritic cells and macrophages (at protein level). In terms of tissue distribution, expressed in cardiomyocytes. As to expression, expressed at very low levels in neurons.

Its subcellular location is the endoplasmic reticulum membrane. It localises to the cell membrane. The protein localises to the synapse. It is found in the cell junction. Required to induce the formation and stabilization of endoplasmic reticulum (ER) tubules. They regulate membrane morphogenesis in the ER by promoting tubular ER production. They influence nuclear envelope expansion, nuclear pore complex formation and proper localization of inner nuclear membrane proteins. However each isoform have specific functions mainly depending on their tissue expression specificities. Functionally, developmental neurite growth regulatory factor with a role as a negative regulator of axon-axon adhesion and growth, and as a facilitator of neurite branching. Regulates neurite fasciculation, branching and extension in the developing nervous system. Involved in down-regulation of growth, stabilization of wiring and restriction of plasticity in the adult CNS. Regulates the radial migration of cortical neurons via an RTN4R-LINGO1 containing receptor complex. Acts as a negative regulator of central nervous system angiogenesis. Inhibits spreading, migration and sprouting of primary brain microvascular endothelial cells (MVECs). Also induces the retraction of MVECs lamellipodia and filopodia in a ROCK pathway-dependent manner. In terms of biological role, mainly function in endothelial cells and vascular smooth muscle cells, is also involved in immune system regulation. Modulator of vascular remodeling, promotes the migration of endothelial cells but inhibits the migration of vascular smooth muscle cells. Regulates endothelial sphingolipid biosynthesis with direct effects on vascular function and blood pressure. Inhibits serine palmitoyltransferase, SPTLC1, the rate-limiting enzyme of the novo sphingolipid biosynthetic pathway, thereby controlling production of endothelial sphingosine-1-phosphate (S1P). Required to promote macrophage homing and functions such as cytokine/chemokine gene expression involved in angiogenesis, arteriogenesis and tissue repair. Mediates ICAM1 induced transendothelial migration of leukocytes such as monocytes and neutrophils and acute inflammation. Necessary for immune responses triggered by nucleic acid sensing TLRs, such as TLR9, is required for proper TLR9 location to endolysosomes. Also involved in immune response to LPS. Plays a role in liver regeneration through the modulation of hepatocytes proliferation. Reduces the anti-apoptotic activity of Bcl-xl and Bcl-2. This is likely consecutive to their change in subcellular location, from the mitochondria to the endoplasmic reticulum, after binding and sequestration. With isoform C, inhibits BACE1 activity and amyloid precursor protein processing. Its function is as follows. Regulates cardiomyocyte apoptosis upon hypoxic conditions. With isoform B, inhibits BACE1 activity and amyloid precursor protein processing. The sequence is that of Reticulon-4 from Mus musculus (Mouse).